A 732-amino-acid chain; its full sequence is uncharacterized protein (732 aa).

Disordered stretches follow at residues 38–90 and 226–629; these read TTLA…NNNK and EESP…MDYQ. Positions 47 to 56 are enriched in low complexity; that stretch reads QQQQQQQQQQ. The segment covering 57–76 has biased composition (polar residues); it reads PPSSSTTKEGGATTTQDNKL. Composition is skewed to low complexity over residues 77 to 89, 231 to 247, and 254 to 318; these read TANG…NNNN, TTTT…TTAA, and TTTT…GTNS. Over residues 327–338 the composition is skewed to basic residues; the sequence is KAKKGVPKKAPT. Composition is skewed to low complexity over residues 339–383, 401–421, and 487–523; these read KKQP…APKT, KTSK…STTK, and SAST…IKSK. A compositionally biased stretch (acidic residues) spans 553–566; it reads AAAEEQEEEEEEDN. 2 stretches are compositionally biased toward low complexity: residues 567-577 and 593-609; these read SNGIQNNNSSN and DNFS…NGLL. The segment covering 610 to 621 has biased composition (acidic residues); the sequence is SEDDDDDDDDDN.

This is an uncharacterized protein from Dictyostelium discoideum (Social amoeba).